The following is an 861-amino-acid chain: Protein argonaute-4 (861 aa).

The PAZ domain occupies 219–338 (PIIEFMCEVL…LPLEVCNIVA (120 aa)). The region spanning 509–820 (LIVVILPGKT…VAFRARYHLV (312 aa)) is the Piwi domain. Residues 825 to 846 (DSAEGSHVSGQSNGRDPQALAK) form a disordered region.

This sequence belongs to the argonaute family. Ago subfamily. Interacts with EIF4B, IMP8, PRMT5, TNRC6A and TNRC6B. Interacts with ZFP36. In terms of processing, ubiquitinated on surface-exposed lysines by a SCF-like E3 ubiquitin-protein ligase complex containing ZSWIM8 during target-directed microRNA degradation (TDMD), a process that mediates degradation of microRNAs (miRNAs). Ubiquitination by the SCF-like E3 ubiquitin-protein ligase complex containing ZSWIM8 leads to its subsequent degradation, thereby exposing miRNAs for degradation. ZSWIM8 recognizes and binds AGO4 when it is engaged with a TDMD target.

The protein resides in the cytoplasm. It localises to the P-body. Functionally, required for RNA-mediated gene silencing (RNAi). Binds to short RNAs such as microRNAs (miRNAs) and represses the translation of mRNAs which are complementary to them. Lacks endonuclease activity and does not appear to cleave target mRNAs. Also required for RNA-directed transcription and replication of the human hapatitis delta virus (HDV). The polypeptide is Protein argonaute-4 (AGO4) (Homo sapiens (Human)).